Reading from the N-terminus, the 367-residue chain is (E)-2-epi-beta-caryophyllene synthase (367 aa).

Mg(2+) contacts are provided by Asp93, Asn234, and Ser238. The DDXXE motif signature appears at 93 to 97 (DDIAE).

The protein belongs to the terpene synthase family. The cofactor is Mg(2+). Mn(2+) is required as a cofactor.

The enzyme catalyses (2E,6E)-farnesyl diphosphate = (E)-2-epi-beta-caryophyllene + diphosphate. It functions in the pathway secondary metabolite biosynthesis; terpenoid biosynthesis. Functionally, sesquiterpene synthase converting farnesyl diphosphate to (E)-2-epi-beta-caryophyllene as the major product, and to two other unidentified sesquiterpenes. Has no diterpene synthase activity. This is (E)-2-epi-beta-caryophyllene synthase from Selaginella moellendorffii (Spikemoss).